Consider the following 580-residue polypeptide: 3-(3-hydroxy-phenyl)propionate/3-hydroxycinnamic acid hydroxylase (580 aa).

Residues 14–43 and 291–301 each bind FAD; these read DVLV…VVEE and FRRGRLLLAGD.

This sequence belongs to the PheA/TfdB FAD monooxygenase family. The cofactor is FAD.

The catalysed reaction is 3-(3-hydroxyphenyl)propanoate + NADH + O2 + H(+) = 3-(2,3-dihydroxyphenyl)propanoate + NAD(+) + H2O. The enzyme catalyses (2E)-3-(3-hydroxyphenyl)prop-2-enoate + NADH + O2 + H(+) = (2E)-3-(2,3-dihydroxyphenyl)prop-2-enoate + NAD(+) + H2O. It functions in the pathway aromatic compound metabolism; 3-phenylpropanoate degradation. Catalyzes the insertion of one atom of molecular oxygen into position 2 of the phenyl ring of 3-(3-hydroxyphenyl)propionate (3-HPP) and hydroxycinnamic acid (3HCI). The polypeptide is 3-(3-hydroxy-phenyl)propionate/3-hydroxycinnamic acid hydroxylase (Mycobacterium avium (strain 104)).